The primary structure comprises 101 residues: Small ribosomal subunit protein uS14 (101 aa).

This sequence belongs to the universal ribosomal protein uS14 family. As to quaternary structure, part of the 30S ribosomal subunit. Contacts proteins S3 and S10.

Its function is as follows. Binds 16S rRNA, required for the assembly of 30S particles and may also be responsible for determining the conformation of the 16S rRNA at the A site. The sequence is that of Small ribosomal subunit protein uS14 from Methylobacterium sp. (strain 4-46).